We begin with the raw amino-acid sequence, 300 residues long: Putative lysophosphatidic acid:oleoyl-CoA acyltransferase (300 aa).

The chain crosses the membrane as a helical span at residues 32–52 (WILIVVVMILRVPLCIISVTL). The short motif at 115–120 (HSSPLD) is the HXXXXD motif element.

It belongs to the 1-acyl-sn-glycerol-3-phosphate acyltransferase family.

Its subcellular location is the lipid droplet. The protein resides in the endoplasmic reticulum membrane. It is found in the golgi apparatus membrane. It carries out the reaction a 1-acyl-sn-glycero-3-phosphate + an acyl-CoA = a 1,2-diacyl-sn-glycero-3-phosphate + CoA. Acyl-CoA-dependent lysophosphatidic acid acyltransferase with preference for oleoyl-CoA. Involved in triacylglyceride homeostasis and lipid droplet formation. Involved in vacuolar protein sorting. This chain is Putative lysophosphatidic acid:oleoyl-CoA acyltransferase (vps66), found in Schizosaccharomyces pombe (strain 972 / ATCC 24843) (Fission yeast).